The primary structure comprises 336 residues: Cellodextrinase A (336 aa).

Glu141 (proton donor) is an active-site residue.

It belongs to the glycosyl hydrolase 5 (cellulase A) family.

Its subcellular location is the secreted. In terms of biological role, crystalline cellulose degradation. The protein is Cellodextrinase A (celA) of Ruminococcus flavefaciens.